The primary structure comprises 670 residues: DUF724 domain-containing protein 1 (670 aa).

Disordered regions lie at residues His-283–Pro-315 and Ala-368–Asp-445. Composition is skewed to polar residues over residues Ser-294–Gly-309, Arg-379–Met-392, and Cys-426–Asn-442. Residues Pro-484–Pro-669 form the DUF724 domain.

Expressed in stems and flowers.

Its subcellular location is the nucleus. In terms of biological role, may be involved in the polar growth of plant cells via transportation of RNAs. In Arabidopsis thaliana (Mouse-ear cress), this protein is DUF724 domain-containing protein 1.